A 213-amino-acid chain; its full sequence is MNIILLGPPGAGKGTQASRLIGKYAIPQISTGDMLRAALKEGTPLGLEAKKYMDQGALVPDSVVIGLVKERIQKPDCSKGYMLDGFPRNVSQAEALDMMLGELKQRIDGVVCIEVPNKELLGRLTGRRTCRSCGAGFHVMFDPPKTDGKCDKCGGELYQRDDDNEATVSSRLKVYEDQTKPLIDYYEKQGKLRRIDGVGSMDAIFGRITAILG.

ATP is bound at residue 10–15 (GAGKGT). Residues 30–59 (STGDMLRAALKEGTPLGLEAKKYMDQGALV) form an NMP region. AMP-binding positions include T31, R36, 57–59 (ALV), 85–88 (GFPR), and Q92. An LID region spans residues 126–163 (GRRTCRSCGAGFHVMFDPPKTDGKCDKCGGELYQRDDD). R127 contributes to the ATP binding site. Residues C130, C133, C150, and C153 each coordinate Zn(2+). Positions 160 and 171 each coordinate AMP. G199 lines the ATP pocket.

It belongs to the adenylate kinase family. As to quaternary structure, monomer.

Its subcellular location is the cytoplasm. The enzyme catalyses AMP + ATP = 2 ADP. Its pathway is purine metabolism; AMP biosynthesis via salvage pathway; AMP from ADP: step 1/1. Catalyzes the reversible transfer of the terminal phosphate group between ATP and AMP. Plays an important role in cellular energy homeostasis and in adenine nucleotide metabolism. The polypeptide is Adenylate kinase (Syntrophobacter fumaroxidans (strain DSM 10017 / MPOB)).